Reading from the N-terminus, the 273-residue chain is 2-dehydro-3-deoxyphosphooctonate aldolase (273 aa).

This sequence belongs to the KdsA family.

The protein localises to the cytoplasm. The enzyme catalyses D-arabinose 5-phosphate + phosphoenolpyruvate + H2O = 3-deoxy-alpha-D-manno-2-octulosonate-8-phosphate + phosphate. The protein operates within carbohydrate biosynthesis; 3-deoxy-D-manno-octulosonate biosynthesis; 3-deoxy-D-manno-octulosonate from D-ribulose 5-phosphate: step 2/3. It participates in bacterial outer membrane biogenesis; lipopolysaccharide biosynthesis. The protein is 2-dehydro-3-deoxyphosphooctonate aldolase of Nitratidesulfovibrio vulgaris (strain DP4) (Desulfovibrio vulgaris).